Here is a 626-residue protein sequence, read N- to C-terminus: Myelin-associated glycoprotein (626 aa).

The N-terminal stretch at 1 to 19 (MIFLTALPLFWIMISASRG) is a signal peptide. The interaction with RTN4R and RTN4RL2 stretch occupies residues 20 to 325 (GHWGAWMPSS…RTVGLSVMYA (306 aa)). Residues 20–516 (GHWGAWMPSS…HRLMWAKIGP (497 aa)) lie on the Extracellular side of the membrane. The 99-residue stretch at 22 to 120 (WGAWMPSSIS…LGGKYYFRGD (99 aa)) folds into the Ig-like V-type domain. 3 disulfides stabilise this stretch: Cys-37–Cys-165, Cys-42–Cys-100, and Cys-159–Cys-217. 65 to 67 (YPK) contacts a ganglioside GT1b (d18:1(4E)). Asn-99 is a glycosylation site (N-linked (GlcNAc...) asparagine). Asn-106 is a glycosylation site (N-linked (GlcNAc...) asparagine; partial). Residues Arg-118 and 124 to 128 (YNQYT) contribute to the a ganglioside GT1b (d18:1(4E)) site. Ig-like C2-type domains follow at residues 139–237 (NTPN…MDVK), 241–325 (VIVE…VMYA), 327–412 (WKPT…VEFA), and 413–508 (PVLL…GAHR). Asn-223 and Asn-246 each carry an N-linked (GlcNAc...) asparagine glycan. An intrachain disulfide couples Cys-261 to Cys-305. An N-linked (GlcNAc...) asparagine glycan is attached at Asn-315. Cys-347 and Cys-392 are oxidised to a cystine. N-linked (GlcNAc...) asparagine glycosylation occurs at Asn-406. Cystine bridges form between Cys-421–Cys-430 and Cys-432–Cys-488. N-linked (GlcNAc...) asparagine glycans are attached at residues Asn-450 and Asn-454. Residues 517–536 (VGAVVAFAILIAIVCYITQT) form a helical membrane-spanning segment. Cys-531 carries S-palmitoyl cysteine lipidation. Residues 537-626 (RRKKNVTESP…LAEYAEIRVK (90 aa)) lie on the Cytoplasmic side of the membrane. 3 positions are modified to phosphoserine: Ser-545, Ser-547, and Ser-549. Positions 577 to 626 (LGSERRLLGLRGEPPELDLSYSHSDLGKRPTKDSYTLTEELAEYAEIRVK) are required for normal axon myelination in the central nervous system. The disordered stretch occupies residues 582-608 (RLLGLRGEPPELDLSYSHSDLGKRPTK).

Belongs to the immunoglobulin superfamily. SIGLEC (sialic acid binding Ig-like lectin) family. In terms of assembly, monomer and homodimer. Interacts (via the first three N-terminal Ig-like domains) with RTN4R and RTN4RL2. Interacts with RTN4R. Interacts with isoform 2 of BSG. In terms of processing, N-glycosylated. Phosphorylated on tyrosine residues. Post-translationally, ubiquitinated, leading to proteasomal degradation. Both isoform 1 and isoform 2 are detected in myelinated structures in the central and peripheral nervous system, in periaxonal myelin and at Schmidt-Lanterman incisures. Detected in optic nerve, in oligodendroglia and in periaxonal myelin sheaths. Detected in compact myelin (at protein level). Both isoform 1 and isoform 2 are detected in the central and peripheral nervous system.

The protein localises to the cell membrane. The protein resides in the membrane raft. In terms of biological role, adhesion molecule that mediates interactions between myelinating cells and neurons by binding to neuronal sialic acid-containing gangliosides and to the glycoproteins RTN4R and RTN4RL2. Not required for initial myelination, but seems to play a role in the maintenance of normal axon myelination. Protects motoneurons against apoptosis, also after injury; protection against apoptosis is probably mediated via interaction with neuronal RTN4R and RTN4RL2. Required to prevent degeneration of myelinated axons in adults; this probably depends on binding to gangliosides on the axon cell membrane. Negative regulator of neurite outgrowth; in dorsal root ganglion neurons the inhibition is mediated primarily via binding to neuronal RTN4R or RTN4RL2 and to a lesser degree via binding to neuronal gangliosides. In cerebellar granule cells the inhibition is mediated primarily via binding to neuronal gangliosides. In sensory neurons, inhibition of neurite extension depends only partially on RTN4R, RTN4RL2 and gangliosides. Inhibits axon longitudinal growth. Inhibits axon outgrowth by binding to RTN4R. Preferentially binds to alpha-2,3-linked sialic acid. Binds ganglioside Gt1b. The sequence is that of Myelin-associated glycoprotein (MAG) from Homo sapiens (Human).